Reading from the N-terminus, the 185-residue chain is MILPINTYSDEVLRRKAKPLKESDAQLEELISNMLESMRNAEGIGLAAPQVGVSLRLIVVDLSLAEGYEAASPMVVINPHILSVKSFNSMEEGCLSIPDVRGDVVRPSAIQLKYRDRNFEECIGEFDRLAARVIQHEIDHLDGTLFVDRMQRRDRRKIQKELDALSRGEINTNYPVAFHEDSVVK.

The Fe cation site is built by C94 and H136. The active site involves E137. Fe cation is bound at residue H140.

This sequence belongs to the polypeptide deformylase family. Fe(2+) is required as a cofactor.

The enzyme catalyses N-terminal N-formyl-L-methionyl-[peptide] + H2O = N-terminal L-methionyl-[peptide] + formate. Its function is as follows. Removes the formyl group from the N-terminal Met of newly synthesized proteins. Requires at least a dipeptide for an efficient rate of reaction. N-terminal L-methionine is a prerequisite for activity but the enzyme has broad specificity at other positions. This chain is Peptide deformylase, found in Chlorobium phaeobacteroides (strain BS1).